The sequence spans 335 residues: Ketol-acid reductoisomerase (NADP(+)) (335 aa).

Residues 2–182 enclose the KARI N-terminal Rossmann domain; sequence VEMFYDKDAD…GCTRAGVIET (181 aa). NADP(+) is bound by residues 25 to 28, Arg48, Ser51, and 83 to 86; these read YGSQ and DEIQ. His108 is an active-site residue. Gly134 is an NADP(+) binding site. The region spanning 183-328 is the KARI C-terminal knotted domain; that stretch reads TFREETETDL…KKLRAMMPWL (146 aa). 4 residues coordinate Mg(2+): Asp191, Glu195, Glu227, and Glu231. Position 252 (Ser252) interacts with substrate.

This sequence belongs to the ketol-acid reductoisomerase family. It depends on Mg(2+) as a cofactor.

The enzyme catalyses (2R)-2,3-dihydroxy-3-methylbutanoate + NADP(+) = (2S)-2-acetolactate + NADPH + H(+). It carries out the reaction (2R,3R)-2,3-dihydroxy-3-methylpentanoate + NADP(+) = (S)-2-ethyl-2-hydroxy-3-oxobutanoate + NADPH + H(+). The protein operates within amino-acid biosynthesis; L-isoleucine biosynthesis; L-isoleucine from 2-oxobutanoate: step 2/4. It functions in the pathway amino-acid biosynthesis; L-valine biosynthesis; L-valine from pyruvate: step 2/4. Its function is as follows. Involved in the biosynthesis of branched-chain amino acids (BCAA). Catalyzes an alkyl-migration followed by a ketol-acid reduction of (S)-2-acetolactate (S2AL) to yield (R)-2,3-dihydroxy-isovalerate. In the isomerase reaction, S2AL is rearranged via a Mg-dependent methyl migration to produce 3-hydroxy-3-methyl-2-ketobutyrate (HMKB). In the reductase reaction, this 2-ketoacid undergoes a metal-dependent reduction by NADPH to yield (R)-2,3-dihydroxy-isovalerate. The polypeptide is Ketol-acid reductoisomerase (NADP(+)) (Methanococcoides burtonii (strain DSM 6242 / NBRC 107633 / OCM 468 / ACE-M)).